A 696-amino-acid polypeptide reads, in one-letter code: Elongation factor G (696 aa).

The tr-type G domain maps to 8 to 286 (EDVRNIGIAA…AVVHYLPSPV (279 aa)). GTP-binding positions include 17–24 (AHIDAGKT), 81–85 (DTPGH), and 135–138 (NKMD).

Belongs to the TRAFAC class translation factor GTPase superfamily. Classic translation factor GTPase family. EF-G/EF-2 subfamily.

The protein resides in the cytoplasm. Functionally, catalyzes the GTP-dependent ribosomal translocation step during translation elongation. During this step, the ribosome changes from the pre-translocational (PRE) to the post-translocational (POST) state as the newly formed A-site-bound peptidyl-tRNA and P-site-bound deacylated tRNA move to the P and E sites, respectively. Catalyzes the coordinated movement of the two tRNA molecules, the mRNA and conformational changes in the ribosome. The chain is Elongation factor G from Sulfurovum sp. (strain NBC37-1).